The sequence spans 585 residues: Mitochondrial sodium/calcium exchanger protein (585 aa).

An N-terminal signal peptide occupies residues Met1–Gly26. The Extracellular portion of the chain corresponds to Thr27 to Leu95. N-linked (GlcNAc...) asparagine glycosylation occurs at Asn46. A helical transmembrane segment spans residues Leu96 to Val116. Residues Thr117–Ala140 are Cytoplasmic-facing. A helical transmembrane segment spans residues Gly141–Phe161. The Extracellular segment spans residues Ser162–Gly168. A helical membrane pass occupies residues Leu169 to Ile189. The Cytoplasmic portion of the chain corresponds to Thr190 to Asp205. A helical transmembrane segment spans residues Ile206–Thr226. The Extracellular portion of the chain corresponds to Leu227–Trp229. Residues Ala230–Val250 form a helical membrane-spanning segment. Residues Tyr251–Arg325 lie on the Cytoplasmic side of the membrane. Ser258 bears the Phosphoserine; by PKA mark. Residues Val326 to Asp346 form a helical membrane-spanning segment. Over Pro347–Cys360 the chain is Extracellular. Residues Leu361 to Ile381 traverse the membrane as a helical segment. Topologically, residues Tyr382–Glu383 are cytoplasmic. The helical transmembrane segment at Ile384–Val404 threads the bilayer. Topologically, residues Thr405 to Arg416 are extracellular. Residues Leu417–Ala437 form a helical membrane-spanning segment. At Thr438–Arg445 the chain is on the cytoplasmic side. The chain crosses the membrane as a helical span at residues Ser446–Gly466. Topologically, residues Asn467–Cys491 are extracellular. Residues Phe492–Ile512 traverse the membrane as a helical segment. Residues Arg513–Gly525 lie on the Cytoplasmic side of the membrane. Residues Leu526–Val546 traverse the membrane as a helical segment. The Extracellular segment spans residues Pro547–Leu559. Residues Cys560 to Ile580 traverse the membrane as a helical segment. Residues His581–Ala585 lie on the Cytoplasmic side of the membrane.

Belongs to the Ca(2+):cation antiporter (CaCA) (TC 2.A.19) family. SLC24A subfamily. In terms of processing, phosphorylation at Ser-258 by PKA prevents calcium overload. In terms of tissue distribution, ubiquitously expressed. Expressed in dental tissues.

The protein localises to the mitochondrion inner membrane. Its subcellular location is the cell membrane. The catalysed reaction is Ca(2+)(in) + 3 Na(+)(out) = Ca(2+)(out) + 3 Na(+)(in). The enzyme catalyses 3 Li(+)(out) + Ca(2+)(in) = 3 Li(+)(in) + Ca(2+)(out). Its activity is regulated as follows. Inhibited by the sodium/calcium exchanger inhibitor CGP-37157. Strongly inhibited by zinc. Its function is as follows. Mitochondrial sodium/calcium antiporter that mediates sodium-dependent calcium efflux from mitochondrion, by mediating the exchange of 3 sodium ions per 1 calcium ion. Plays a central role in mitochondrial calcium homeostasis by mediating mitochondrial calcium extrusion: calcium efflux is essential for mitochondrial function and cell survival, notably in cardiomyocytes. Regulates rates of glucose-dependent insulin secretion in pancreatic beta-cells during the first phase of insulin secretion: acts by mediating efflux of calcium from mitochondrion, thereby affecting cytoplasmic calcium responses. Required for store-operated Ca(2+) entry (SOCE) and Ca(2+) release-activated Ca(2+) (CRAC) channel regulation: sodium transport by SLC8B1 leads to promote calcium-shuttling that modulates mitochondrial redox status, thereby regulating SOCE activity. Involved in B-lymphocyte chemotaxis. Able to transport Ca(2+) in exchange of either Li(+) or Na(+), explaining how Li(+) catalyzes Ca(2+) exchange. In contrast to other members of the family its function is independent of K(+). This chain is Mitochondrial sodium/calcium exchanger protein, found in Mus musculus (Mouse).